The following is a 353-amino-acid chain: Photosystem II protein D1 (353 aa).

Residue T2 is modified to N-acetylthreonine. Position 2 is a phosphothreonine (T2). The next 3 membrane-spanning stretches (helical) occupy residues 29–46 (YIGW…TATS), 118–133 (HFLL…EWEL), and 142–156 (WIAV…AATA). H118 contacts chlorophyll a. Y126 lines the pheophytin a pocket. [CaMn4O5] cluster contacts are provided by D170 and E189. Residues 197–218 (FHMLGVAGVFGGSLFSAMHGSL) traverse the membrane as a helical segment. Residue H198 coordinates chlorophyll a. A quinone-binding positions include H215 and 264-265 (SF). H215 is a Fe cation binding site. H272 provides a ligand contact to Fe cation. A helical membrane pass occupies residues 274 to 288 (FLAAWPVVGIWFTAL). The [CaMn4O5] cluster site is built by H332, E333, D342, and A344. Residues 345–353 (AVEAPSING) constitute a propeptide that is removed on maturation.

This sequence belongs to the reaction center PufL/M/PsbA/D family. PSII is composed of 1 copy each of membrane proteins PsbA, PsbB, PsbC, PsbD, PsbE, PsbF, PsbH, PsbI, PsbJ, PsbK, PsbL, PsbM, PsbT, PsbX, PsbY, PsbZ, Psb30/Ycf12, at least 3 peripheral proteins of the oxygen-evolving complex and a large number of cofactors. It forms dimeric complexes. The cofactor is The D1/D2 heterodimer binds P680, chlorophylls that are the primary electron donor of PSII, and subsequent electron acceptors. It shares a non-heme iron and each subunit binds pheophytin, quinone, additional chlorophylls, carotenoids and lipids. D1 provides most of the ligands for the Mn4-Ca-O5 cluster of the oxygen-evolving complex (OEC). There is also a Cl(-1) ion associated with D1 and D2, which is required for oxygen evolution. The PSII complex binds additional chlorophylls, carotenoids and specific lipids.. Post-translationally, tyr-161 forms a radical intermediate that is referred to as redox-active TyrZ, YZ or Y-Z. C-terminally processed by CTPA; processing is essential to allow assembly of the oxygen-evolving complex and thus photosynthetic growth.

It is found in the plastid. The protein resides in the chloroplast thylakoid membrane. It carries out the reaction 2 a plastoquinone + 4 hnu + 2 H2O = 2 a plastoquinol + O2. Its function is as follows. This is one of the two reaction center proteins of photosystem II. In terms of biological role, photosystem II (PSII) is a light-driven water:plastoquinone oxidoreductase that uses light energy to abstract electrons from H(2)O, generating O(2) and a proton gradient subsequently used for ATP formation. It consists of a core antenna complex that captures photons, and an electron transfer chain that converts photonic excitation into a charge separation. The D1/D2 (PsbA/PsbD) reaction center heterodimer binds P680, the primary electron donor of PSII as well as several subsequent electron acceptors. The chain is Photosystem II protein D1 from Pisum sativum (Garden pea).